The chain runs to 412 residues: Thyroxine-binding globulin (412 aa).

The N-terminal stretch at Met1–Cys16 is a signal peptide. 5 N-linked (GlcNAc...) asparagine glycosylation sites follow: Asn20, Asn35, Asn98, Asn164, and Asn252. Residues Asn292 and Lys395 each contribute to the thyroxine site.

Belongs to the serpin family. In terms of tissue distribution, expressed by the liver and secreted in plasma.

Its subcellular location is the secreted. Major thyroid hormone transport protein in serum. In Sus scrofa (Pig), this protein is Thyroxine-binding globulin (SERPINA7).